The primary structure comprises 638 residues: ABC transporter G family member 12 (638 aa).

The tract at residues 42-61 (KQEKAKKKNDTESSTGDMNT) is disordered. Positions 58–301 (DMNTGVSTTI…SLGYPCPNNT (244 aa)) constitute an ABC transporter domain. 91–98 (GPSGSGKS) is an ATP binding site. Residues 374-633 (GNFVARVGTA…WTSYLALHFL (260 aa)) form the ABC transmembrane type-2 domain. A run of 7 helical transmembrane segments spans residues 376–396 (FVARVGTAVVTGLLFGVCFAG), 410–430 (TIFFLITGLNLTPFAVISLFL), 459–479 (TLIVFLVALINAAICYLFAHL), 484–504 (GHFFFAIMVYFFVHLLSDFMI), 516–536 (MTFAYGSGLSVIYMLFAGFYV), 544–564 (SFGWLHWVNPLFYSFVSLVVN), and 612–632 (FGVVVAWTVFFFWTSYLALHF).

Belongs to the ABC transporter superfamily. ABCG family. Eye pigment precursor importer (TC 3.A.1.204) subfamily.

The protein localises to the membrane. This is ABC transporter G family member 12 (abcG12) from Dictyostelium discoideum (Social amoeba).